A 439-amino-acid chain; its full sequence is FBD-associated F-box protein At5g56380 (439 aa).

An F-box domain is found at methionine 1 to proline 61. The FBD domain occupies tryptophan 358–threonine 406.

The chain is FBD-associated F-box protein At5g56380 from Arabidopsis thaliana (Mouse-ear cress).